The following is a 308-amino-acid chain: Dihydroorotate dehydrogenase A (fumarate) (308 aa).

Residues Ser24 and 48 to 49 (KS) contribute to the FMN site. Residues Lys48, 72 to 76 (NANGL), and Asn132 contribute to the substrate site. Residue Asn132 coordinates FMN. Cys135 functions as the Nucleophile in the catalytic mechanism. Residues Lys171 and Ile197 each contribute to the FMN site. 198 to 199 (NT) serves as a coordination point for substrate. FMN-binding positions include Gly223 and 249–250 (GG).

It belongs to the dihydroorotate dehydrogenase family. Type 1 subfamily. Homodimer. It depends on FMN as a cofactor.

It localises to the cytoplasm. It carries out the reaction (S)-dihydroorotate + fumarate = orotate + succinate. It functions in the pathway pyrimidine metabolism; UMP biosynthesis via de novo pathway. Its function is as follows. Catalyzes the conversion of dihydroorotate to orotate with fumarate as the electron acceptor. This chain is Dihydroorotate dehydrogenase A (fumarate) (pyrD), found in Limosilactobacillus reuteri (strain DSM 20016) (Lactobacillus reuteri).